Reading from the N-terminus, the 76-residue chain is Putative snRNP Sm-like protein (76 aa).

The 73-residue stretch at 4-76 (RPLDVIHKSL…VLAISPVEIE (73 aa)) folds into the Sm domain.

This sequence belongs to the snRNP Sm proteins family.

This is Putative snRNP Sm-like protein from Thermococcus sibiricus (strain DSM 12597 / MM 739).